A 304-amino-acid chain; its full sequence is Dermonecrotic toxin LlSicTox-betaIA1 (304 aa).

The first 21 residues, 1–21 (MLLSAVISFIGFAAFLQEANG), serve as a signal peptide directing secretion. The propeptide occupies 22–26 (HVVER). His38 is an active-site residue. Mg(2+) is bound by residues Glu58 and Asp60. The active-site Nucleophile is His74. Intrachain disulfides connect Cys78-Cys84 and Cys80-Cys223. Position 118 (Asp118) interacts with Mg(2+).

Belongs to the arthropod phospholipase D family. Class II subfamily. Class IIb sub-subfamily. Mg(2+) serves as cofactor. Expressed by the venom gland.

It is found in the secreted. It carries out the reaction an N-(acyl)-sphingosylphosphocholine = an N-(acyl)-sphingosyl-1,3-cyclic phosphate + choline. The enzyme catalyses an N-(acyl)-sphingosylphosphoethanolamine = an N-(acyl)-sphingosyl-1,3-cyclic phosphate + ethanolamine. The catalysed reaction is a 1-acyl-sn-glycero-3-phosphocholine = a 1-acyl-sn-glycero-2,3-cyclic phosphate + choline. It catalyses the reaction a 1-acyl-sn-glycero-3-phosphoethanolamine = a 1-acyl-sn-glycero-2,3-cyclic phosphate + ethanolamine. Functionally, dermonecrotic toxins cleave the phosphodiester linkage between the phosphate and headgroup of certain phospholipids (sphingolipid and lysolipid substrates), forming an alcohol (often choline) and a cyclic phosphate. This toxin acts on sphingomyelin (SM) with low activity. It may also act on ceramide phosphoethanolamine (CPE), lysophosphatidylcholine (LPC) and lysophosphatidylethanolamine (LPE), but not on lysophosphatidylserine (LPS), and lysophosphatidylglycerol (LPG). It acts by transphosphatidylation, releasing exclusively cyclic phosphate products as second products. Induces hemolysis, dermonecrosis, and edema. Also induces platelet aggregation. The polypeptide is Dermonecrotic toxin LlSicTox-betaIA1 (Loxosceles laeta (South American recluse spider)).